The sequence spans 78 residues: Translation initiation factor IF-1, chloroplastic (78 aa).

An S1-like domain is found at 1 to 72 (MKKQKLIDME…TKGRITYRFH (72 aa)).

Belongs to the IF-1 family. Component of the 30S ribosomal translation pre-initiation complex which assembles on the 30S ribosome in the order IF-2 and IF-3, IF-1 and N-formylmethionyl-tRNA(fMet); mRNA recruitment can occur at any time during PIC assembly.

Its subcellular location is the plastid. It is found in the chloroplast. Functionally, one of the essential components for the initiation of protein synthesis. Stabilizes the binding of IF-2 and IF-3 on the 30S subunit to which N-formylmethionyl-tRNA(fMet) subsequently binds. Helps modulate mRNA selection, yielding the 30S pre-initiation complex (PIC). Upon addition of the 50S ribosomal subunit IF-1, IF-2 and IF-3 are released leaving the mature 70S translation initiation complex. The chain is Translation initiation factor IF-1, chloroplastic from Huperzia lucidula (Shining clubmoss).